Reading from the N-terminus, the 241-residue chain is Major prion protein (241 aa).

Residues Met1–Cys15 form the signal peptide. Residues Lys16 to Tyr31 form an interaction with ADGRG6 region. The tract at residues Lys16–Ser223 is interaction with GRB2, ERI3 and SYN1. The tract at residues Arg18–Ser101 is disordered. A run of 5 repeats spans residues Pro44 to Gln52, Pro53 to Gln60, Pro61 to Gln68, Pro69 to Gln76, and Pro77 to Gln84. Residues Pro44 to Gln84 form a 5 X 8 AA tandem repeats of P-H-G-G-G-W-G-Q region. Residues Gln45 to Thr88 show a composition bias toward gly residues. Cu(2+)-binding residues include His54, Gly55, Gly56, His62, Gly63, Gly64, His70, Gly71, Gly72, His78, Gly79, and Gly80. Residues Gln91 to Ser101 show a composition bias toward basic residues. Cys172 and Cys207 are disulfide-bonded. Asn174 and Asn190 each carry an N-linked (GlcNAc...) asparagine glycan. Ser223 carries the GPI-anchor amidated serine lipid modification. Residues Ser224–Ile241 constitute a propeptide, removed in mature form.

The protein belongs to the prion family. In terms of assembly, monomer and homodimer. Has a tendency to aggregate into amyloid fibrils containing a cross-beta spine, formed by a steric zipper of superposed beta-strands. Soluble oligomers may represent an intermediate stage on the path to fibril formation. Copper binding may promote oligomerization. Interacts with GRB2, APP, ERI3/PRNPIP and SYN1. Mislocalized cytosolically exposed PrP interacts with MGRN1; this interaction alters MGRN1 subcellular location and causes lysosomal enlargement. Interacts with APP. Interacts with KIAA1191. Interacts with ADGRG6.

It is found in the cell membrane. The protein localises to the golgi apparatus. Its primary physiological function is unclear. May play a role in neuronal development and synaptic plasticity. May be required for neuronal myelin sheath maintenance. May promote myelin homeostasis through acting as an agonist for ADGRG6 receptor. May play a role in iron uptake and iron homeostasis. Soluble oligomers are toxic to cultured neuroblastoma cells and induce apoptosis (in vitro). Association with GPC1 (via its heparan sulfate chains) targets PRNP to lipid rafts. Also provides Cu(2+) or Zn(2+) for the ascorbate-mediated GPC1 deaminase degradation of its heparan sulfate side chains. This is Major prion protein (PRNP) from Mandrillus sphinx (Mandrill).